Consider the following 479-residue polypeptide: ATP synthase subunit beta (479 aa).

168–175 (GGAGVGKT) provides a ligand contact to ATP.

It belongs to the ATPase alpha/beta chains family. In terms of assembly, F-type ATPases have 2 components, CF(1) - the catalytic core - and CF(0) - the membrane proton channel. CF(1) has five subunits: alpha(3), beta(3), gamma(1), delta(1), epsilon(1). CF(0) has three main subunits: a(1), b(2) and c(9-12). The alpha and beta chains form an alternating ring which encloses part of the gamma chain. CF(1) is attached to CF(0) by a central stalk formed by the gamma and epsilon chains, while a peripheral stalk is formed by the delta and b chains.

The protein localises to the cell membrane. The enzyme catalyses ATP + H2O + 4 H(+)(in) = ADP + phosphate + 5 H(+)(out). Its function is as follows. Produces ATP from ADP in the presence of a proton gradient across the membrane. The catalytic sites are hosted primarily by the beta subunits. The chain is ATP synthase subunit beta from Frankia casuarinae (strain DSM 45818 / CECT 9043 / HFP020203 / CcI3).